The chain runs to 255 residues: 4-hydroxy-tetrahydrodipicolinate reductase (255 aa).

Residues 9–14 (GFKGKM), Asp35, 89–91 (GTT), and 115–118 (APNF) contribute to the NAD(+) site. His145 acts as the Proton donor/acceptor in catalysis. His146 contributes to the (S)-2,3,4,5-tetrahydrodipicolinate binding site. The active-site Proton donor is Lys149. Residue 155–156 (GT) coordinates (S)-2,3,4,5-tetrahydrodipicolinate.

Belongs to the DapB family.

It is found in the cytoplasm. It carries out the reaction (S)-2,3,4,5-tetrahydrodipicolinate + NAD(+) + H2O = (2S,4S)-4-hydroxy-2,3,4,5-tetrahydrodipicolinate + NADH + H(+). The enzyme catalyses (S)-2,3,4,5-tetrahydrodipicolinate + NADP(+) + H2O = (2S,4S)-4-hydroxy-2,3,4,5-tetrahydrodipicolinate + NADPH + H(+). The protein operates within amino-acid biosynthesis; L-lysine biosynthesis via DAP pathway; (S)-tetrahydrodipicolinate from L-aspartate: step 4/4. In terms of biological role, catalyzes the conversion of 4-hydroxy-tetrahydrodipicolinate (HTPA) to tetrahydrodipicolinate. This Streptococcus pneumoniae (strain P1031) protein is 4-hydroxy-tetrahydrodipicolinate reductase.